A 113-amino-acid chain; its full sequence is Large ribosomal subunit protein P1 (113 aa).

Residues 84–113 form a disordered region; it reads APAAAAKKETKKEEVKKEESDDDMGMGLFD. Over residues 89–102 the composition is skewed to basic and acidic residues; the sequence is AKKETKKEEVKKEE.

Belongs to the eukaryotic ribosomal protein P1/P2 family. P1 and P2 exist as dimers at the large ribosomal subunit.

Plays an important role in the elongation step of protein synthesis. The polypeptide is Large ribosomal subunit protein P1 (rplp1) (Dictyostelium discoideum (Social amoeba)).